Consider the following 377-residue polypeptide: N5-carboxyaminoimidazole ribonucleotide synthase (377 aa).

ATP contacts are provided by residues arginine 93, lysine 133, 138 to 144 (GYDGKGQ), 175 to 178 (EEFV), glutamate 183, histidine 206, and 257 to 258 (NE). Positions 97 to 287 (KALLDHAGVR…QFENHLRAVC (191 aa)) constitute an ATP-grasp domain.

Belongs to the PurK/PurT family. Homodimer.

The catalysed reaction is 5-amino-1-(5-phospho-beta-D-ribosyl)imidazole + hydrogencarbonate + ATP = 5-carboxyamino-1-(5-phospho-D-ribosyl)imidazole + ADP + phosphate + 2 H(+). It functions in the pathway purine metabolism; IMP biosynthesis via de novo pathway; 5-amino-1-(5-phospho-D-ribosyl)imidazole-4-carboxylate from 5-amino-1-(5-phospho-D-ribosyl)imidazole (N5-CAIR route): step 1/2. Catalyzes the ATP-dependent conversion of 5-aminoimidazole ribonucleotide (AIR) and HCO(3)(-) to N5-carboxyaminoimidazole ribonucleotide (N5-CAIR). The chain is N5-carboxyaminoimidazole ribonucleotide synthase from Vibrio vulnificus (strain CMCP6).